The chain runs to 316 residues: Phosphate acyltransferase (316 aa).

It belongs to the PlsX family. In terms of assembly, homodimer. Probably interacts with PlsY.

The protein resides in the cytoplasm. The enzyme catalyses a fatty acyl-[ACP] + phosphate = an acyl phosphate + holo-[ACP]. It participates in lipid metabolism; phospholipid metabolism. Catalyzes the reversible formation of acyl-phosphate (acyl-PO(4)) from acyl-[acyl-carrier-protein] (acyl-ACP). This enzyme utilizes acyl-ACP as fatty acyl donor, but not acyl-CoA. This is Phosphate acyltransferase from Chlamydia abortus (strain DSM 27085 / S26/3) (Chlamydophila abortus).